The primary structure comprises 273 residues: Cbp/p300-interacting transactivator 2 (273 aa).

A disordered region spans residues 137-204 (DLHPAAGHQM…GSGGSGSSNM (68 aa)). The span at 165 to 200 (STPGGSGGSSTPGGSGGSAGGGAGSSNSGGGSGGSG) shows a compositional bias: gly residues.

The protein belongs to the CITED family. As to quaternary structure, interacts (via C-terminus) with SMAD2. Interacts (via C-terminus) with SMAD3 (via MH2 domain). Interacts with LHX2 (via LIM domains). Interacts with WT1. Interacts (via C-terminus) with EP300 (via CH1 domain); the interaction is stimulated in response to hypoxia. Interacts with PPARA. Interacts (via C-terminus) with TFAP2A, TFAP2B and TFAP2C.

Its subcellular location is the nucleus. Functionally, transcriptional coactivator of the p300/CBP-mediated transcription complex. Acts as a bridge, linking TFAP2 transcription factors and the p300/CBP transcriptional coactivator complex in order to stimulate TFAP2-mediated transcriptional activation. Positively regulates TGF-beta signaling through its association with the SMAD/p300/CBP-mediated transcriptional coactivator complex. Stimulates the peroxisome proliferator-activated receptors PPARA transcriptional activity. Enhances estrogen-dependent transactivation mediated by estrogen receptors. Also acts as a transcriptional corepressor; interferes with the binding of the transcription factors HIF1A or STAT2 and the p300/CBP transcriptional coactivator complex. Participates in sex determination and early gonad development by stimulating transcription activation of SRY. Plays a role in controlling left-right patterning during embryogenesis; potentiates transcriptional activation of NODAL-mediated gene transcription in the left lateral plate mesoderm (LPM). Plays an essential role in differentiation of the adrenal cortex from the adrenogonadal primordium (AGP); stimulates WT1-mediated transcription activation thereby up-regulating the nuclear hormone receptor NR5A1 promoter activity. Associates with chromatin to the PITX2 P1 promoter region. The polypeptide is Cbp/p300-interacting transactivator 2 (CITED2) (Saguinus labiatus (Red-chested mustached tamarin)).